The sequence spans 424 residues: Adenosylmethionine-8-amino-7-oxononanoate aminotransferase (424 aa).

W46 contacts substrate. 106–107 provides a ligand contact to pyridoxal 5'-phosphate; that stretch reads GS. Y138 is a substrate binding site. D240 is a binding site for pyridoxal 5'-phosphate. Substrate contacts are provided by K269 and G303. K269 carries the post-translational modification N6-(pyridoxal phosphate)lysine. A pyridoxal 5'-phosphate-binding site is contributed by 304–305; that stretch reads HS. Position 391 (R391) interacts with substrate.

Belongs to the class-III pyridoxal-phosphate-dependent aminotransferase family. BioA subfamily. As to quaternary structure, homodimer. Requires pyridoxal 5'-phosphate as cofactor.

The protein localises to the cytoplasm. The enzyme catalyses (8S)-8-amino-7-oxononanoate + S-adenosyl-L-methionine = S-adenosyl-4-methylsulfanyl-2-oxobutanoate + (7R,8S)-7,8-diammoniononanoate. It functions in the pathway cofactor biosynthesis; biotin biosynthesis; 7,8-diaminononanoate from 8-amino-7-oxononanoate (SAM route): step 1/1. Its function is as follows. Catalyzes the transfer of the alpha-amino group from S-adenosyl-L-methionine (SAM) to 7-keto-8-aminopelargonic acid (KAPA) to form 7,8-diaminopelargonic acid (DAPA). It is the only aminotransferase known to utilize SAM as an amino donor. Complements a bioU deletion in Synechocystis PCC 6803. The sequence is that of Adenosylmethionine-8-amino-7-oxononanoate aminotransferase from Synechococcus elongatus (strain ATCC 33912 / PCC 7942 / FACHB-805) (Anacystis nidulans R2).